A 447-amino-acid chain; its full sequence is Tubulin alpha-2 chain (447 aa).

Residues Gln-11, Glu-71, Gly-144, Thr-145, Thr-179, Asn-206, and Asn-228 each coordinate GTP. Position 71 (Glu-71) interacts with Mg(2+). Residue Glu-254 is part of the active site.

The protein belongs to the tubulin family. As to quaternary structure, dimer of alpha and beta chains. A typical microtubule is a hollow water-filled tube with an outer diameter of 25 nm and an inner diameter of 15 nM. Alpha-beta heterodimers associate head-to-tail to form protofilaments running lengthwise along the microtubule wall with the beta-tubulin subunit facing the microtubule plus end conferring a structural polarity. Microtubules usually have 13 protofilaments but different protofilament numbers can be found in some organisms and specialized cells. Mg(2+) serves as cofactor. Post-translationally, undergoes a tyrosination/detyrosination cycle, the cyclic removal and re-addition of a C-terminal tyrosine residue by the enzymes tubulin tyrosine carboxypeptidase (TTCP) and tubulin tyrosine ligase (TTL), respectively.

Its subcellular location is the cytoplasm. It localises to the cytoskeleton. The catalysed reaction is GTP + H2O = GDP + phosphate + H(+). Tubulin is the major constituent of microtubules, a cylinder consisting of laterally associated linear protofilaments composed of alpha- and beta-tubulin heterodimers. Microtubules grow by the addition of GTP-tubulin dimers to the microtubule end, where a stabilizing cap forms. Below the cap, tubulin dimers are in GDP-bound state, owing to GTPase activity of alpha-tubulin. The polypeptide is Tubulin alpha-2 chain (TUBA2) (Eleusine indica (Goosegrass)).